Reading from the N-terminus, the 382-residue chain is D-galactonate dehydratase 1 (382 aa).

Mg(2+) is bound at residue Asp183. The active-site Proton donor is His185. The Mg(2+) site is built by Glu209 and Glu235. His285 serves as the catalytic Proton acceptor.

The protein belongs to the mandelate racemase/muconate lactonizing enzyme family. GalD subfamily. The cofactor is Mg(2+).

The catalysed reaction is D-galactonate = 2-dehydro-3-deoxy-D-galactonate + H2O. The protein operates within carbohydrate acid metabolism; D-galactonate degradation; D-glyceraldehyde 3-phosphate and pyruvate from D-galactonate: step 1/3. Catalyzes the dehydration of D-galactonate to 2-keto-3-deoxy-D-galactonate. The sequence is that of D-galactonate dehydratase 1 from Escherichia coli (strain SMS-3-5 / SECEC).